Consider the following 125-residue polypeptide: RutC family protein STK_08110 (125 aa).

It belongs to the RutC family.

In Sulfurisphaera tokodaii (strain DSM 16993 / JCM 10545 / NBRC 100140 / 7) (Sulfolobus tokodaii), this protein is RutC family protein STK_08110.